A 351-amino-acid polypeptide reads, in one-letter code: uncharacterized protein (351 aa).

Residues Asp-215, Asp-226, His-290, Glu-319, and Glu-333 each contribute to the Mn(2+) site.

This sequence belongs to the peptidase M24B family. Mn(2+) serves as cofactor.

This is an uncharacterized protein from Staphylococcus aureus (strain MRSA252).